The chain runs to 186 residues: Peptidyl-tRNA hydrolase (186 aa).

Tyrosine 16 contributes to the tRNA binding site. Histidine 21 functions as the Proton acceptor in the catalytic mechanism. TRNA is bound by residues tyrosine 66, asparagine 68, and asparagine 114.

It belongs to the PTH family. Monomer.

The protein localises to the cytoplasm. The enzyme catalyses an N-acyl-L-alpha-aminoacyl-tRNA + H2O = an N-acyl-L-amino acid + a tRNA + H(+). Hydrolyzes ribosome-free peptidyl-tRNAs (with 1 or more amino acids incorporated), which drop off the ribosome during protein synthesis, or as a result of ribosome stalling. Functionally, catalyzes the release of premature peptidyl moieties from peptidyl-tRNA molecules trapped in stalled 50S ribosomal subunits, and thus maintains levels of free tRNAs and 50S ribosomes. The sequence is that of Peptidyl-tRNA hydrolase from Ureaplasma parvum serovar 3 (strain ATCC 700970).